Consider the following 674-residue polypeptide: RNA polymerase sigma factor RpoD (674 aa).

The disordered stretch occupies residues 214–252 (AEGAAPAARRPASDEPEYDADGNPISRIDEEEDDDDSSN). The sigma-70 factor domain-2 stretch occupies residues 440-510 (MVEANLRLVI…TRSIADQART (71 aa)). The short motif at 464–467 (DLIQ) is the Interaction with polymerase core subunit RpoC element. Positions 519–595 (ETINKLVRTG…DKNAILPLDS (77 aa)) are sigma-70 factor domain-3. The interval 608 to 661 (VLASLTPREERVLRMRFGIGMNTDHTLEEVGQQFSVTRERIRQIEAKALRKLKH) is sigma-70 factor domain-4. The H-T-H motif DNA-binding region spans 634–653 (LEEVGQQFSVTRERIRQIEA).

This sequence belongs to the sigma-70 factor family. RpoD/SigA subfamily. In terms of assembly, interacts transiently with the RNA polymerase catalytic core.

Its subcellular location is the cytoplasm. Sigma factors are initiation factors that promote the attachment of RNA polymerase to specific initiation sites and are then released. This sigma factor is the primary sigma factor during exponential growth. This Rhodobacter capsulatus (strain ATCC BAA-309 / NBRC 16581 / SB1003) protein is RNA polymerase sigma factor RpoD.